Reading from the N-terminus, the 146-residue chain is Ribonuclease H (146 aa).

Residues 1-143 form the RNase H type-1 domain; the sequence is MEKTITIYTD…CDELARLAIK (143 aa). Residues Asp-10, Glu-48, Asp-70, and Asp-135 each coordinate Mg(2+).

It belongs to the RNase H family. As to quaternary structure, monomer. Mg(2+) is required as a cofactor.

It localises to the cytoplasm. It catalyses the reaction Endonucleolytic cleavage to 5'-phosphomonoester.. In terms of biological role, endonuclease that specifically degrades the RNA of RNA-DNA hybrids. In Chlorobaculum parvum (strain DSM 263 / NCIMB 8327) (Chlorobium vibrioforme subsp. thiosulfatophilum), this protein is Ribonuclease H.